The chain runs to 440 residues: uncharacterized protein (440 aa).

A signal peptide spans 1 to 17; that stretch reads MDRFFCTVWVWSVLFGA. The N-palmitoyl cysteine moiety is linked to residue C18. Residue C18 is the site of S-diacylglycerol cysteine attachment. The interval 241–268 is disordered; the sequence is SALQERPSSPEPVVSTIPSPEGEENSAA.

Its subcellular location is the cell membrane. This is an uncharacterized protein from Treponema pallidum (strain Nichols).